A 478-amino-acid chain; its full sequence is Ribosomal RNA small subunit methyltransferase F (478 aa).

S-adenosyl-L-methionine-binding positions include 121 to 127 (ASAPGSK), E145, D172, and D190. The active-site Nucleophile is C243.

This sequence belongs to the class I-like SAM-binding methyltransferase superfamily. RsmB/NOP family.

The protein localises to the cytoplasm. It catalyses the reaction cytidine(1407) in 16S rRNA + S-adenosyl-L-methionine = 5-methylcytidine(1407) in 16S rRNA + S-adenosyl-L-homocysteine + H(+). In terms of biological role, specifically methylates the cytosine at position 1407 (m5C1407) of 16S rRNA. The polypeptide is Ribosomal RNA small subunit methyltransferase F (Shewanella sediminis (strain HAW-EB3)).